A 348-amino-acid polypeptide reads, in one-letter code: Dihydroorotase (348 aa).

Zn(2+) is bound by residues His14 and His16. Substrate is bound by residues 16-18 (HLR) and Asn42. 3 residues coordinate Zn(2+): Lys100, His137, and His175. Position 100 is an N6-carboxylysine (Lys100). Residue His137 coordinates substrate. A substrate-binding site is contributed by Leu220. Zn(2+) is bound at residue Asp248. Asp248 is a catalytic residue. His252 and Ala264 together coordinate substrate.

It belongs to the metallo-dependent hydrolases superfamily. DHOase family. Class II DHOase subfamily. As to quaternary structure, homodimer. The cofactor is Zn(2+).

The catalysed reaction is (S)-dihydroorotate + H2O = N-carbamoyl-L-aspartate + H(+). It participates in pyrimidine metabolism; UMP biosynthesis via de novo pathway; (S)-dihydroorotate from bicarbonate: step 3/3. In terms of biological role, catalyzes the reversible cyclization of carbamoyl aspartate to dihydroorotate. This is Dihydroorotase from Pseudomonas paraeruginosa (strain DSM 24068 / PA7) (Pseudomonas aeruginosa (strain PA7)).